Here is a 332-residue protein sequence, read N- to C-terminus: Protein pelota homolog (332 aa).

The protein belongs to the eukaryotic release factor 1 family. Pelota subfamily. Monomer. The cofactor is a divalent metal cation.

Its subcellular location is the cytoplasm. In terms of biological role, may function in recognizing stalled ribosomes, interact with stem-loop structures in stalled mRNA molecules, and effect endonucleolytic cleavage of the mRNA. May play a role in the release non-functional ribosomes and degradation of damaged mRNAs. Has endoribonuclease activity. The chain is Protein pelota homolog from Pyrobaculum calidifontis (strain DSM 21063 / JCM 11548 / VA1).